Reading from the N-terminus, the 168-residue chain is Pheromone-binding protein (168 aa).

Positions 1–26 are cleaved as a signal peptide; the sequence is MNKTTTKMKVAVVAIVVYLAVGNVDS. Cystine bridges form between Cys-45–Cys-80, Cys-76–Cys-134, and Cys-123–Cys-143.

Belongs to the PBP/GOBP family. In terms of assembly, homodimer. In terms of tissue distribution, antenna.

This major soluble protein in olfactory sensilla of male moths might serve to solubilize the extremely hydrophobic pheromone molecules and to transport pheromone through the aqueous lymph to receptors located on olfactory cilia. PBP is also found in sensilla from female M.sexta antennae. This Manduca sexta (Tobacco hawkmoth) protein is Pheromone-binding protein.